Reading from the N-terminus, the 344-residue chain is Phosphoribosylformylglycinamidine cyclo-ligase (344 aa).

It belongs to the AIR synthase family.

The protein resides in the cytoplasm. The catalysed reaction is 2-formamido-N(1)-(5-O-phospho-beta-D-ribosyl)acetamidine + ATP = 5-amino-1-(5-phospho-beta-D-ribosyl)imidazole + ADP + phosphate + H(+). The protein operates within purine metabolism; IMP biosynthesis via de novo pathway; 5-amino-1-(5-phospho-D-ribosyl)imidazole from N(2)-formyl-N(1)-(5-phospho-D-ribosyl)glycinamide: step 2/2. This is Phosphoribosylformylglycinamidine cyclo-ligase from Anaeromyxobacter sp. (strain Fw109-5).